We begin with the raw amino-acid sequence, 244 residues long: tRNA pseudouridine synthase A (244 aa).

The Nucleophile role is filled by aspartate 52. Tyrosine 110 contributes to the substrate binding site.

Belongs to the tRNA pseudouridine synthase TruA family. In terms of assembly, homodimer.

The enzyme catalyses uridine(38/39/40) in tRNA = pseudouridine(38/39/40) in tRNA. Functionally, formation of pseudouridine at positions 38, 39 and 40 in the anticodon stem and loop of transfer RNAs. The sequence is that of tRNA pseudouridine synthase A from Thermoanaerobacter pseudethanolicus (strain ATCC 33223 / 39E) (Clostridium thermohydrosulfuricum).